The chain runs to 295 residues: Pyridoxal 5'-phosphate synthase subunit PdxS (295 aa).

Asp23 serves as a coordination point for D-ribose 5-phosphate. The Schiff-base intermediate with D-ribose 5-phosphate role is filled by Lys80. Gly152 provides a ligand contact to D-ribose 5-phosphate. D-glyceraldehyde 3-phosphate is bound at residue Arg164. Residues Gly213 and 234–235 (GS) contribute to the D-ribose 5-phosphate site.

Belongs to the PdxS/SNZ family. As to quaternary structure, in the presence of PdxT, forms a dodecamer of heterodimers.

It carries out the reaction aldehydo-D-ribose 5-phosphate + D-glyceraldehyde 3-phosphate + L-glutamine = pyridoxal 5'-phosphate + L-glutamate + phosphate + 3 H2O + H(+). Its pathway is cofactor biosynthesis; pyridoxal 5'-phosphate biosynthesis. In terms of biological role, catalyzes the formation of pyridoxal 5'-phosphate from ribose 5-phosphate (RBP), glyceraldehyde 3-phosphate (G3P) and ammonia. The ammonia is provided by the PdxT subunit. Can also use ribulose 5-phosphate and dihydroxyacetone phosphate as substrates, resulting from enzyme-catalyzed isomerization of RBP and G3P, respectively. The polypeptide is Pyridoxal 5'-phosphate synthase subunit PdxS (Methanosphaera stadtmanae (strain ATCC 43021 / DSM 3091 / JCM 11832 / MCB-3)).